Reading from the N-terminus, the 470-residue chain is Cytochrome P450 monooxygenase FUM2 (470 aa).

Cys414 provides a ligand contact to heme.

The protein belongs to the cytochrome P450 family. Requires heme as cofactor.

The protein operates within mycotoxin biosynthesis. Its function is as follows. Cytochrome P450 monooxygenase; part of the gene cluster that mediates the biosynthesis of fumonisins B1 (FB1), B2 (FB2), B3 (FB3), and B4 (FB4), which are carcinogenic mycotoxins. Within the pathway, FUM2 performs the C-10 hydroxylation present in FB2 and FB4 and which occurs early in the biosynthesis. The biosynthesis starts with the FUM1-catalyzed carbon chain assembly from one molecule of acetyl-CoA, eight molecules of malonyl-CoA, and two molecules of methionine (in S-adenosyl form). The C18 polyketide chain is released from the enzyme by a nucleophilic attack of a carbanion, which is derived from R-carbon of alanine by decarboxylation, on the carbonyl carbon of polyketide acyl chain. This step is catalyzed by the pyridoxal 5'-phosphate-dependent aminoacyl transferase FUM8. The resultant 3-keto intermediate is then stereospecifically reduced to a 3-hydroxyl product by reductase FUM13. Subsequent oxidations at C-10 by the cytochrome P450 monooxygenase FUM2, C-14 and C-15 by FUM6, FUM12 or FUM15, tricarballylic esterification of the hydroxyl groups on C-14 and C-15 by acyltransferase FUM14, and C-5 hydroxylation by 2-keto-glutarate-dependent dioxygenase FUM3 furnish the biosynthesis of fumonisins. The tricarballylic moieties are most likely derived from the citric acid cycle, and their addition to the carbon backbone may involve FUM7, FUM10, FUM11 and FUM14. This Gibberella moniliformis (strain M3125 / FGSC 7600) (Maize ear and stalk rot fungus) protein is Cytochrome P450 monooxygenase FUM2.